The primary structure comprises 208 residues: Uracil phosphoribosyltransferase (208 aa).

5-phospho-alpha-D-ribose 1-diphosphate-binding positions include R78, R103, and 130-138 (DPMLATGGS). Residues I193 and 198–200 (GDA) each bind uracil. D199 lines the 5-phospho-alpha-D-ribose 1-diphosphate pocket.

It belongs to the UPRTase family. Mg(2+) serves as cofactor.

It catalyses the reaction UMP + diphosphate = 5-phospho-alpha-D-ribose 1-diphosphate + uracil. It participates in pyrimidine metabolism; UMP biosynthesis via salvage pathway; UMP from uracil: step 1/1. With respect to regulation, allosterically activated by GTP. Its function is as follows. Catalyzes the conversion of uracil and 5-phospho-alpha-D-ribose 1-diphosphate (PRPP) to UMP and diphosphate. This Desulfovibrio desulfuricans (strain ATCC 27774 / DSM 6949 / MB) protein is Uracil phosphoribosyltransferase.